We begin with the raw amino-acid sequence, 396 residues long: Elongation factor Tu (396 aa).

Positions K10–E205 constitute a tr-type G domain. The segment at G19–T26 is G1. G19–T26 contacts GTP. Residue T26 participates in Mg(2+) binding. The segment at G61–S65 is G2. The segment at D82–G85 is G3. Residues D82 to H86 and N137 to D140 contribute to the GTP site. The G4 stretch occupies residues N137–D140. Positions S175–L177 are G5.

It belongs to the TRAFAC class translation factor GTPase superfamily. Classic translation factor GTPase family. EF-Tu/EF-1A subfamily. In terms of assembly, monomer.

The protein localises to the cytoplasm. The enzyme catalyses GTP + H2O = GDP + phosphate + H(+). GTP hydrolase that promotes the GTP-dependent binding of aminoacyl-tRNA to the A-site of ribosomes during protein biosynthesis. This is Elongation factor Tu from Halalkalibacterium halodurans (strain ATCC BAA-125 / DSM 18197 / FERM 7344 / JCM 9153 / C-125) (Bacillus halodurans).